A 918-amino-acid chain; its full sequence is Isoleucine--tRNA ligase (918 aa).

Positions 57–67 (PYANGHIHIGH) match the 'HIGH' region motif. Position 564 (E564) interacts with L-isoleucyl-5'-AMP. The 'KMSKS' region motif lies at 605-609 (KMSKS). K608 is an ATP binding site. Zn(2+)-binding residues include C888, C891, C903, and C906.

Belongs to the class-I aminoacyl-tRNA synthetase family. IleS type 1 subfamily. Monomer. Zn(2+) serves as cofactor.

The protein localises to the cytoplasm. The catalysed reaction is tRNA(Ile) + L-isoleucine + ATP = L-isoleucyl-tRNA(Ile) + AMP + diphosphate. Catalyzes the attachment of isoleucine to tRNA(Ile). As IleRS can inadvertently accommodate and process structurally similar amino acids such as valine, to avoid such errors it has two additional distinct tRNA(Ile)-dependent editing activities. One activity is designated as 'pretransfer' editing and involves the hydrolysis of activated Val-AMP. The other activity is designated 'posttransfer' editing and involves deacylation of mischarged Val-tRNA(Ile). This chain is Isoleucine--tRNA ligase, found in Nitratiruptor sp. (strain SB155-2).